Reading from the N-terminus, the 492-residue chain is N-succinylglutamate 5-semialdehyde dehydrogenase (492 aa).

Gly220 to Gly225 contributes to the NAD(+) binding site. Residues Glu243 and Cys277 contribute to the active site.

The protein belongs to the aldehyde dehydrogenase family. AstD subfamily.

It carries out the reaction N-succinyl-L-glutamate 5-semialdehyde + NAD(+) + H2O = N-succinyl-L-glutamate + NADH + 2 H(+). It functions in the pathway amino-acid degradation; L-arginine degradation via AST pathway; L-glutamate and succinate from L-arginine: step 4/5. In terms of biological role, catalyzes the NAD-dependent reduction of succinylglutamate semialdehyde into succinylglutamate. The protein is N-succinylglutamate 5-semialdehyde dehydrogenase of Salmonella gallinarum (strain 287/91 / NCTC 13346).